Here is a 549-residue protein sequence, read N- to C-terminus: uncharacterized protein (549 aa).

Positions 1 to 19 (MNWRRIVWLLALVTLPTLA) are cleaved as a signal peptide.

This is an uncharacterized protein from Escherichia coli (strain K12).